A 412-amino-acid polypeptide reads, in one-letter code: Imidazolonepropionase (412 aa).

Fe(3+) contacts are provided by His76 and His78. Zn(2+) is bound by residues His76 and His78. Positions 85, 148, and 181 each coordinate 4-imidazolone-5-propanoate. Tyr148 is an N-formimidoyl-L-glutamate binding site. Fe(3+) is bound at residue His242. His242 provides a ligand contact to Zn(2+). Residue Glu245 coordinates 4-imidazolone-5-propanoate. Asp317 lines the Fe(3+) pocket. Asp317 lines the Zn(2+) pocket. 2 residues coordinate N-formimidoyl-L-glutamate: Asn319 and Gly321. Ser322 contributes to the 4-imidazolone-5-propanoate binding site.

The protein belongs to the metallo-dependent hydrolases superfamily. HutI family. Requires Zn(2+) as cofactor. Fe(3+) is required as a cofactor.

It is found in the cytoplasm. The enzyme catalyses 4-imidazolone-5-propanoate + H2O = N-formimidoyl-L-glutamate. It participates in amino-acid degradation; L-histidine degradation into L-glutamate; N-formimidoyl-L-glutamate from L-histidine: step 3/3. Catalyzes the hydrolytic cleavage of the carbon-nitrogen bond in imidazolone-5-propanoate to yield N-formimidoyl-L-glutamate. It is the third step in the universal histidine degradation pathway. The protein is Imidazolonepropionase of Staphylococcus aureus (strain USA300 / TCH1516).